A 1116-amino-acid polypeptide reads, in one-letter code: Electrogenic sodium bicarbonate cotransporter 4 (1116 aa).

A compositionally biased stretch (basic and acidic residues) spans 1-14 (MKVDEEKAGVKKLD). 3 disordered regions span residues 1-92 (MKVD…TRSP), 222-257 (PIHR…STED), and 431-467 (PGQM…SGDE). The Cytoplasmic portion of the chain corresponds to 1–515 (MKVDEEKAGV…YDGFHLQSIS (515 aa)). Residues 233–247 (SVSTTNRSSARSSSA) are compositionally biased toward low complexity. The segment covering 437 to 464 (SVGGGGASAGGGGSGGGAGGSGAGGVGS) has biased composition (gly residues). A helical transmembrane segment spans residues 516–536 (AVLFIYLGCITNAITFGGLLG). Residues 537–558 (DATDNYQGVMESFLGTAMAGSL) lie on the Extracellular side of the membrane. The helical transmembrane segment at 559–579 (FCLFSGQPLIILSSTGPILIF) threads the bilayer. Topologically, residues 580 to 600 (EKLLFDFSKANGLDYMEFRLW) are cytoplasmic. The chain crosses the membrane as a helical span at residues 601 to 621 (IGLHSAIQCLILVATDASFII). The Extracellular segment spans residues 622–631 (KYITRFTEEG). Residues 632–652 (FSTLISFIFIYDAIKKMIGAF) traverse the membrane as a helical segment. The Cytoplasmic portion of the chain corresponds to 653–730 (KYYPINTDFK…GGRLLGSSCQ (78 aa)). A helical transmembrane segment spans residues 731–751 (FVPDLALMSFILFFGTYSMTL). Over 752-768 (TLKKFKFSRYFPTKVRT) the chain is Extracellular. Residues 769-789 (LVADFSIVFSILLFCGIDACF) form a helical membrane-spanning segment. Residues 790-819 (GLQTPKLHVPSVIKPTRPDRGWFVAPFGKN) are Cytoplasmic-facing. The chain crosses the membrane as a helical span at residues 820–840 (PWWVYPASILPALLVTILIFM). Over 841-865 (DQQITAVIVNRKENKLRKAAGYHLD) the chain is Extracellular. A helical transmembrane segment spans residues 866-886 (LFWVGILMALCSFTGLPWYVA). Topologically, residues 887–922 (ATVISIAHIDSLKMETETSAPGEQPQFLGVREQRVT) are cytoplasmic. The chain crosses the membrane as a helical span at residues 923-943 (GVMVFILTGISVFLAPILKYI). The Extracellular portion of the chain corresponds to 944–945 (PM). The chain crosses the membrane as a helical span at residues 946–966 (PVLYGVFLYMGVASLNGIQFW). Residues 967–987 (ERCKLFLMPAKHQPDHAFLRH) lie on the Cytoplasmic side of the membrane. 2 helical membrane passes run 988–1008 (VPLR…ALLW) and 1009–1029 (ILKS…LIIV). Topologically, residues 1030-1116 (RRLLDLIFSQ…KRSSSWSYSL (87 aa)) are cytoplasmic.

The protein belongs to the anion exchanger (TC 2.A.31) family.

The protein resides in the apical cell membrane. It is found in the basolateral cell membrane. It carries out the reaction 2 hydrogencarbonate(out) + Na(+)(out) = 2 hydrogencarbonate(in) + Na(+)(in). The catalysed reaction is 3 hydrogencarbonate(out) + Na(+)(out) = 3 hydrogencarbonate(in) + Na(+)(in). Its function is as follows. Mediates sodium- and bicarbonate-dependent electrogenic sodium bicarbonate cotransport, with a Na(+):HCO3(-) stoichiometry varying from 1:2 to 1:3. This is Electrogenic sodium bicarbonate cotransporter 4 (Slc4a5) from Mus musculus (Mouse).